Reading from the N-terminus, the 357-residue chain is Histidinol-phosphate aminotransferase (357 aa).

The residue at position 212 (Lys212) is an N6-(pyridoxal phosphate)lysine.

It belongs to the class-II pyridoxal-phosphate-dependent aminotransferase family. Histidinol-phosphate aminotransferase subfamily. Homodimer. It depends on pyridoxal 5'-phosphate as a cofactor.

The enzyme catalyses L-histidinol phosphate + 2-oxoglutarate = 3-(imidazol-4-yl)-2-oxopropyl phosphate + L-glutamate. Its pathway is amino-acid biosynthesis; L-histidine biosynthesis; L-histidine from 5-phospho-alpha-D-ribose 1-diphosphate: step 7/9. The polypeptide is Histidinol-phosphate aminotransferase (Pectobacterium atrosepticum (strain SCRI 1043 / ATCC BAA-672) (Erwinia carotovora subsp. atroseptica)).